The chain runs to 235 residues: Elongation factor Tu (235 aa).

The tr-type G domain occupies 1-125; the sequence is KNMITGAAQM…EVDEYIPTPE (125 aa). 47 to 50 provides a ligand contact to GTP; that stretch reads NKED.

It belongs to the TRAFAC class translation factor GTPase superfamily. Classic translation factor GTPase family. EF-Tu/EF-1A subfamily. Monomer.

It is found in the cytoplasm. It carries out the reaction GTP + H2O = GDP + phosphate + H(+). Functionally, GTP hydrolase that promotes the GTP-dependent binding of aminoacyl-tRNA to the A-site of ribosomes during protein biosynthesis. This is Elongation factor Tu (tufA) from Gloeothece membranacea (strain PCC 6501 / SAG 26.84).